Consider the following 85-residue polypeptide: Large ribosomal subunit protein bL27 (85 aa).

It belongs to the bacterial ribosomal protein bL27 family.

This chain is Large ribosomal subunit protein bL27, found in Cellvibrio japonicus (strain Ueda107) (Pseudomonas fluorescens subsp. cellulosa).